Here is a 479-residue protein sequence, read N- to C-terminus: 6-phosphogluconate dehydrogenase, decarboxylating (479 aa).

Residues 9 to 14 (GLAVMG), 32 to 34 (NRT), 74 to 76 (IQA), and N102 each bind NADP(+). Substrate is bound by residues N102 and 128-130 (SGG). The Proton acceptor role is filled by K182. 185–186 (HN) is a binding site for substrate. E189 acts as the Proton donor in catalysis. The substrate site is built by Y190, K259, R286, R446, and H452.

Belongs to the 6-phosphogluconate dehydrogenase family. As to quaternary structure, homodimer.

It carries out the reaction 6-phospho-D-gluconate + NADP(+) = D-ribulose 5-phosphate + CO2 + NADPH. The protein operates within carbohydrate degradation; pentose phosphate pathway; D-ribulose 5-phosphate from D-glucose 6-phosphate (oxidative stage): step 3/3. Catalyzes the oxidative decarboxylation of 6-phosphogluconate to ribulose 5-phosphate and CO(2), with concomitant reduction of NADP to NADPH. This Chlamydia pneumoniae (Chlamydophila pneumoniae) protein is 6-phosphogluconate dehydrogenase, decarboxylating (gnd).